Consider the following 185-residue polypeptide: Ribose 1,5-bisphosphate phosphokinase PhnN (185 aa).

10 to 17 (GPSGSGKD) contacts ATP.

This sequence belongs to the ribose 1,5-bisphosphokinase family.

It carries out the reaction alpha-D-ribose 1,5-bisphosphate + ATP = 5-phospho-alpha-D-ribose 1-diphosphate + ADP. It functions in the pathway metabolic intermediate biosynthesis; 5-phospho-alpha-D-ribose 1-diphosphate biosynthesis; 5-phospho-alpha-D-ribose 1-diphosphate from D-ribose 5-phosphate (route II): step 3/3. Functionally, catalyzes the phosphorylation of ribose 1,5-bisphosphate to 5-phospho-D-ribosyl alpha-1-diphosphate (PRPP). This Shigella dysenteriae serotype 1 (strain Sd197) protein is Ribose 1,5-bisphosphate phosphokinase PhnN.